The following is a 458-amino-acid chain: Neuronal acetylcholine receptor subunit beta-3 (458 aa).

The N-terminal stretch at 1-21 is a signal peptide; the sequence is MLPDFMLVLIVLGIPSSATTG. The Extracellular segment spans residues 22-237; that stretch reads FNSIAENEDA…VLRRLPLFYT (216 aa). Residues Asn-51, Asn-138, and Asn-166 are each glycosylated (N-linked (GlcNAc...) asparagine). A disulfide bridge links Cys-153 with Cys-167. 3 consecutive transmembrane segments (helical) span residues 238–258, 267–287, and 300–320; these read LFLIIPCLGLSFLTVLVFYLP, LSTSVLVSLTVFLLVIEEIIP, and LLFIMIFVTLSIIVTVFVINV. Over 321–428 the chain is Cytoplasmic; it reads HHRSSSTYHP…WKFVAQVLDR (108 aa). A helical membrane pass occupies residues 429 to 449; it reads IFLWLFLIVSVTGSVLIFTPA.

The protein belongs to the ligand-gated ion channel (TC 1.A.9) family. Acetylcholine receptor (TC 1.A.9.1) subfamily. Beta-3/CHRNB3 sub-subfamily. Neuronal AChR seems to be composed of two different type of subunits: alpha and beta. CHRNB3/beta-3 subunit is only able to form functional nAChRs when co-assembled with another beta subunit. Participates in pentameric assemblies along with CHRNA4/alpha-4 and CHRNB2/beta-2 subunits and with CHRNA6/alpha-6 as well, forming stoichiometries such as (CHRNA3:CHRNB4)2:CHRNB3, (CHRNA4:CHRNB2)2:CHRNB3 or (CHRNA6:CHRNB2)2:CHRNB3.

It localises to the synaptic cell membrane. The protein localises to the cell membrane. The enzyme catalyses Ca(2+)(in) = Ca(2+)(out). The catalysed reaction is K(+)(in) = K(+)(out). It carries out the reaction Na(+)(in) = Na(+)(out). Its activity is regulated as follows. Activated by a myriad of ligands such as acetylcholine, cytisine, nicotine, choline and epibatidine. In terms of biological role, component of neuronal acetylcholine receptors (nAChRs) that function as pentameric, ligand-gated cation channels with high calcium permeability among other activities. nAChRs are excitatory neurotrasnmitter receptors formed by a collection of nAChR subunits known to mediate synaptic transmission in the nervous system and the neuromuscular junction. Each nAchR subunit confers differential attributes to channel properties, including activation, deactivation and desensitization kinetics, pH sensitivity, cation permeability, and binding to allosteric modulators. Has an accessory rather than functional role and is only able to form functional nAChRs when co-assembled with another beta subunit. Participates in pentameric assemblies along with CHRNA3, CHRNA4, CHRNA6, CHRNB2 and CHRNB4. Modulates receptor assembly and increases receptor sensitivity to nicotine when associated with CHRNB2, CHRNA4 and/or CHRNA6 as well as CHRNA3 and CHRNB4. Seems to play a role in nicotine addiction. The polypeptide is Neuronal acetylcholine receptor subunit beta-3 (Homo sapiens (Human)).